Reading from the N-terminus, the 524-residue chain is Mediator of RNA polymerase II transcription subunit 8 (524 aa).

Position 1 is an N-acetylmethionine (methionine 1). A coiled-coil region spans residues 137-162; sequence MQIERLKARMDMIAAACENAERVLAD. Disordered regions lie at residues 291–315 and 474–524; these read VPSP…LMQL and MMQT…QNPQ. Low complexity-rich tracts occupy residues 295–315 and 474–505; these read QHQI…LMQL and MMQT…TNQQ. Polar residues predominate over residues 506-524; the sequence is SLQPNNMMQNAQQRHQNPQ.

It belongs to the Mediator complex subunit 8 family. Component of the Mediator complex.

It is found in the nucleus. Its function is as follows. Component of the Mediator complex, a coactivator involved in the regulated transcription of nearly all RNA polymerase II-dependent genes. Mediator functions as a bridge to convey information from gene-specific regulatory proteins to the basal RNA polymerase II transcription machinery. The Mediator complex, having a compact conformation in its free form, is recruited to promoters by direct interactions with regulatory proteins and serves for the assembly of a functional preinitiation complex with RNA polymerase II and the general transcription factors. Regulator of both plant defense and flowering time. Involved in pollen tube growth. This chain is Mediator of RNA polymerase II transcription subunit 8 (MED8), found in Arabidopsis thaliana (Mouse-ear cress).